The sequence spans 285 residues: 4-diphosphocytidyl-2-C-methyl-D-erythritol kinase (285 aa).

K14 is a catalytic residue. P97–S107 contributes to the ATP binding site. D139 is a catalytic residue.

This sequence belongs to the GHMP kinase family. IspE subfamily.

The enzyme catalyses 4-CDP-2-C-methyl-D-erythritol + ATP = 4-CDP-2-C-methyl-D-erythritol 2-phosphate + ADP + H(+). The protein operates within isoprenoid biosynthesis; isopentenyl diphosphate biosynthesis via DXP pathway; isopentenyl diphosphate from 1-deoxy-D-xylulose 5-phosphate: step 3/6. Functionally, catalyzes the phosphorylation of the position 2 hydroxy group of 4-diphosphocytidyl-2C-methyl-D-erythritol. The protein is 4-diphosphocytidyl-2-C-methyl-D-erythritol kinase of Tolumonas auensis (strain DSM 9187 / NBRC 110442 / TA 4).